The chain runs to 84 residues: Large ribosomal subunit protein bL27 (84 aa).

Residues 1–21 (MAHKKGGGSTKNGRDSNPQYL) are disordered.

Belongs to the bacterial ribosomal protein bL27 family.

The polypeptide is Large ribosomal subunit protein bL27 (Chloroherpeton thalassium (strain ATCC 35110 / GB-78)).